The chain runs to 326 residues: Aspartate--ammonia ligase (326 aa).

The protein belongs to the class-II aminoacyl-tRNA synthetase family. AsnA subfamily.

It is found in the cytoplasm. It carries out the reaction L-aspartate + NH4(+) + ATP = L-asparagine + AMP + diphosphate + H(+). Its pathway is amino-acid biosynthesis; L-asparagine biosynthesis; L-asparagine from L-aspartate (ammonia route): step 1/1. In Malacoplasma penetrans (strain HF-2) (Mycoplasma penetrans), this protein is Aspartate--ammonia ligase.